The primary structure comprises 113 residues: Ribosome-binding factor A (113 aa).

The protein belongs to the RbfA family. As to quaternary structure, monomer. Binds 30S ribosomal subunits, but not 50S ribosomal subunits or 70S ribosomes.

It localises to the cytoplasm. Its function is as follows. One of several proteins that assist in the late maturation steps of the functional core of the 30S ribosomal subunit. Associates with free 30S ribosomal subunits (but not with 30S subunits that are part of 70S ribosomes or polysomes). Required for efficient processing of 16S rRNA. May interact with the 5'-terminal helix region of 16S rRNA. This Oceanobacillus iheyensis (strain DSM 14371 / CIP 107618 / JCM 11309 / KCTC 3954 / HTE831) protein is Ribosome-binding factor A.